Reading from the N-terminus, the 406-residue chain is Imidazolonepropionase (406 aa).

Positions 75 and 77 each coordinate Fe(3+). His-75 and His-77 together coordinate Zn(2+). 4-imidazolone-5-propanoate-binding residues include Arg-84, Tyr-147, and His-180. Tyr-147 is an N-formimidoyl-L-glutamate binding site. His-245 lines the Fe(3+) pocket. His-245 serves as a coordination point for Zn(2+). Residue Gln-248 participates in 4-imidazolone-5-propanoate binding. Position 320 (Asp-320) interacts with Fe(3+). Asp-320 provides a ligand contact to Zn(2+). 2 residues coordinate N-formimidoyl-L-glutamate: Asn-322 and Gly-324. A 4-imidazolone-5-propanoate-binding site is contributed by Thr-325.

This sequence belongs to the metallo-dependent hydrolases superfamily. HutI family. Requires Zn(2+) as cofactor. Fe(3+) is required as a cofactor.

It is found in the cytoplasm. It carries out the reaction 4-imidazolone-5-propanoate + H2O = N-formimidoyl-L-glutamate. The protein operates within amino-acid degradation; L-histidine degradation into L-glutamate; N-formimidoyl-L-glutamate from L-histidine: step 3/3. Its function is as follows. Catalyzes the hydrolytic cleavage of the carbon-nitrogen bond in imidazolone-5-propanoate to yield N-formimidoyl-L-glutamate. It is the third step in the universal histidine degradation pathway. This Hyphomonas neptunium (strain ATCC 15444) protein is Imidazolonepropionase.